We begin with the raw amino-acid sequence, 331 residues long: Olfactory receptor 10S1 (331 aa).

The Extracellular portion of the chain corresponds to 1-38 (MTSRSVCEKMTMTTENPNQTVVSHFFLEGLRYTAKHSS). Asparagine 18 carries N-linked (GlcNAc...) asparagine glycosylation. The chain crosses the membrane as a helical span at residues 39-59 (LFFLLFLLIYSITVAGNLLIL). Topologically, residues 60–67 (LTVGSDSH) are cytoplasmic. A helical membrane pass occupies residues 68–88 (LSLPMYHFLGHLSFLDACLST). Residues 89 to 113 (VTVPKVMAGLLTLDGKVISFEGCAV) are Extracellular-facing. Cysteine 111 and cysteine 203 are oxidised to a cystine. Residues 114–134 (QLYCFHFLASTECFLYTVMAY) traverse the membrane as a helical segment. The Cytoplasmic segment spans residues 135 to 153 (DRYLAICQPLHYPVAMNRR). A helical transmembrane segment spans residues 154–174 (MCAEMAGITWAIGATHAAIHT). At 175-211 (SLTFRLLYCGPCHIAYFFCDIPPVLKLACTDTTINEL) the chain is on the extracellular side. A helical transmembrane segment spans residues 212-231 (VMLASIGIVAAGCLILIVIS). Over 232–251 (YIFIVAAVLRIRTAQGRQRA) the chain is Cytoplasmic. Residues 252-272 (FSPCTAQLTGVLLYYVPPVCI) form a helical membrane-spanning segment. The Extracellular portion of the chain corresponds to 273-283 (YLQPRSSEAGA). The helical transmembrane segment at 284 to 304 (GAPAVFYTIVTPMLNPFIYTL) threads the bilayer. At 305-331 (RNKEVKHALQRLLCSSFRESTAGSPPP) the chain is on the cytoplasmic side.

This sequence belongs to the G-protein coupled receptor 1 family.

It is found in the cell membrane. Its function is as follows. Odorant receptor. The sequence is that of Olfactory receptor 10S1 (OR10S1) from Homo sapiens (Human).